We begin with the raw amino-acid sequence, 220 residues long: NADH-quinone oxidoreductase subunit I (220 aa).

2 4Fe-4S ferredoxin-type domains span residues 71–102 (LQRLLDSGSERCIGCGLCEKICTSNCIRIITH) and 112–141 (DSYTINLGRCIYCGLCAEVCPELAIVMGNR). Positions 82, 85, 88, 92, 121, 124, 127, and 131 each coordinate [4Fe-4S] cluster. The segment at 187-220 (MQATPLDYVQEPSKEESKEETPTNPESNKGDENV) is disordered. Residues 198–207 (PSKEESKEET) are compositionally biased toward basic and acidic residues.

It belongs to the complex I 23 kDa subunit family. In terms of assembly, NDH-1 is composed of 14 different subunits. Subunits NuoA, H, J, K, L, M, N constitute the membrane sector of the complex. The cofactor is [4Fe-4S] cluster.

It localises to the cell inner membrane. The enzyme catalyses a quinone + NADH + 5 H(+)(in) = a quinol + NAD(+) + 4 H(+)(out). NDH-1 shuttles electrons from NADH, via FMN and iron-sulfur (Fe-S) centers, to quinones in the respiratory chain. The immediate electron acceptor for the enzyme in this species is believed to be ubiquinone. Couples the redox reaction to proton translocation (for every two electrons transferred, four hydrogen ions are translocated across the cytoplasmic membrane), and thus conserves the redox energy in a proton gradient. In Helicobacter pylori (strain HPAG1), this protein is NADH-quinone oxidoreductase subunit I.